Consider the following 321-residue polypeptide: Arginine-hydroxylase NDUFAF5, mitochondrial (321 aa).

The transit peptide at 1-25 (MNVSVKSLRGVSRTWRSFSSRQGMN) directs the protein to the mitochondrion.

The protein belongs to the methyltransferase superfamily. Interacts with NDUFS7.

It is found in the mitochondrion inner membrane. Arginine hydroxylase that mediates hydroxylation of 'Arg-111' of NDUFS7 and is involved in the assembly of mitochondrial NADH:ubiquinone oxidoreductase complex (complex I, MT-ND1) at early stages. May also have methyltransferase activity. In Danio rerio (Zebrafish), this protein is Arginine-hydroxylase NDUFAF5, mitochondrial.